Consider the following 400-residue polypeptide: uncharacterized protein (400 aa).

The first 23 residues, 1–23 (MSRKLLLALTFLVVLGIAVVVMA), serve as a signal peptide directing secretion.

This is an uncharacterized protein from Archaeoglobus fulgidus (strain ATCC 49558 / DSM 4304 / JCM 9628 / NBRC 100126 / VC-16).